A 348-amino-acid chain; its full sequence is Quinone oxidoreductase-like protein 1 (348 aa).

It belongs to the zinc-containing alcohol dehydrogenase family. Quinone oxidoreductase subfamily. Component of the FERRY complex composed of five subunits, TBCK, PPP1R21, FERRY3, CRYZL1 and GATD1 with a ratio of 1:2:1:2:4, respectively.

The protein resides in the early endosome. In terms of biological role, component of the FERRY complex (Five-subunit Endosomal Rab5 and RNA/ribosome intermediary). The FERRY complex directly interacts with mRNAs and RAB5A, and functions as a RAB5A effector involved in the localization and the distribution of specific mRNAs most likely by mediating their endosomal transport. The complex recruits mRNAs and ribosomes to early endosomes through direct mRNA-interaction. This is Quinone oxidoreductase-like protein 1 (Cryzl1) from Mus musculus (Mouse).